A 141-amino-acid chain; its full sequence is Large ribosomal subunit protein uL11 (141 aa).

It belongs to the universal ribosomal protein uL11 family. In terms of assembly, part of the ribosomal stalk of the 50S ribosomal subunit. Interacts with L10 and the large rRNA to form the base of the stalk. L10 forms an elongated spine to which L12 dimers bind in a sequential fashion forming a multimeric L10(L12)X complex. Post-translationally, one or more lysine residues are methylated.

Functionally, forms part of the ribosomal stalk which helps the ribosome interact with GTP-bound translation factors. This Synechococcus sp. (strain CC9605) protein is Large ribosomal subunit protein uL11.